We begin with the raw amino-acid sequence, 756 residues long: Ribosomal RNA large subunit methyltransferase K/L (756 aa).

In terms of domain architecture, THUMP spans 46-157; sequence TAYRLCLWSR…RGEAILSLDL (112 aa). The segment covering 395 to 409 has biased composition (basic and acidic residues); the sequence is ERRTPEQRQAEREQA. The interval 395–441 is disordered; sequence ERRTPEQRQAEREQAAYDQTPNEPQERKFNKNGNPIKPTPAPAPVIE.

It belongs to the methyltransferase superfamily. RlmKL family.

It is found in the cytoplasm. It catalyses the reaction guanosine(2445) in 23S rRNA + S-adenosyl-L-methionine = N(2)-methylguanosine(2445) in 23S rRNA + S-adenosyl-L-homocysteine + H(+). The catalysed reaction is guanosine(2069) in 23S rRNA + S-adenosyl-L-methionine = N(2)-methylguanosine(2069) in 23S rRNA + S-adenosyl-L-homocysteine + H(+). In terms of biological role, specifically methylates the guanine in position 2445 (m2G2445) and the guanine in position 2069 (m7G2069) of 23S rRNA. This is Ribosomal RNA large subunit methyltransferase K/L from Pseudomonas fluorescens (strain Pf0-1).